A 214-amino-acid chain; its full sequence is Triosephosphate isomerase (214 aa).

6–8 is a binding site for substrate; it reads NLK. The active-site Electrophile is histidine 85. Glutamate 133 acts as the Proton acceptor in catalysis. Substrate is bound by residues isoleucine 138, glycine 173, and 194-195; that span reads AS.

This sequence belongs to the triosephosphate isomerase family. Homotetramer; dimer of dimers.

It is found in the cytoplasm. The catalysed reaction is D-glyceraldehyde 3-phosphate = dihydroxyacetone phosphate. It participates in carbohydrate biosynthesis; gluconeogenesis. Its pathway is carbohydrate degradation; glycolysis; D-glyceraldehyde 3-phosphate from glycerone phosphate: step 1/1. Its function is as follows. Involved in the gluconeogenesis. Catalyzes stereospecifically the conversion of dihydroxyacetone phosphate (DHAP) to D-glyceraldehyde-3-phosphate (G3P). The chain is Triosephosphate isomerase from Halobacterium salinarum (strain ATCC 700922 / JCM 11081 / NRC-1) (Halobacterium halobium).